Consider the following 93-residue polypeptide: Pyrimidine/purine nucleoside phosphorylase (93 aa).

The protein belongs to the nucleoside phosphorylase PpnP family.

It catalyses the reaction a purine D-ribonucleoside + phosphate = a purine nucleobase + alpha-D-ribose 1-phosphate. The catalysed reaction is adenosine + phosphate = alpha-D-ribose 1-phosphate + adenine. It carries out the reaction cytidine + phosphate = cytosine + alpha-D-ribose 1-phosphate. The enzyme catalyses guanosine + phosphate = alpha-D-ribose 1-phosphate + guanine. It catalyses the reaction inosine + phosphate = alpha-D-ribose 1-phosphate + hypoxanthine. The catalysed reaction is thymidine + phosphate = 2-deoxy-alpha-D-ribose 1-phosphate + thymine. It carries out the reaction uridine + phosphate = alpha-D-ribose 1-phosphate + uracil. The enzyme catalyses xanthosine + phosphate = alpha-D-ribose 1-phosphate + xanthine. Catalyzes the phosphorolysis of diverse nucleosides, yielding D-ribose 1-phosphate and the respective free bases. Can use uridine, adenosine, guanosine, cytidine, thymidine, inosine and xanthosine as substrates. Also catalyzes the reverse reactions. The protein is Pyrimidine/purine nucleoside phosphorylase of Pseudomonas savastanoi pv. phaseolicola (strain 1448A / Race 6) (Pseudomonas syringae pv. phaseolicola (strain 1448A / Race 6)).